A 143-amino-acid chain; its full sequence is Small ribosomal subunit protein bS6 (143 aa).

Residues 96–143 (VTEASPMAAAKEERRDDRREVKKDVAAAPVEAKEDSVEEKSEEAASEE) are disordered. Positions 105 to 143 (AKEERRDDRREVKKDVAAAPVEAKEDSVEEKSEEAASEE) are enriched in basic and acidic residues.

The protein belongs to the bacterial ribosomal protein bS6 family.

Binds together with bS18 to 16S ribosomal RNA. This chain is Small ribosomal subunit protein bS6, found in Colwellia psychrerythraea (strain 34H / ATCC BAA-681) (Vibrio psychroerythus).